The sequence spans 93 residues: Large ribosomal subunit protein bL31B (93 aa).

The protein belongs to the bacterial ribosomal protein bL31 family. Type B subfamily. As to quaternary structure, part of the 50S ribosomal subunit.

This chain is Large ribosomal subunit protein bL31B, found in Pseudomonas syringae pv. syringae (strain B728a).